We begin with the raw amino-acid sequence, 283 residues long: Elongation factor Ts (283 aa).

Positions 80-83 (TDFV) are involved in Mg(2+) ion dislocation from EF-Tu.

This sequence belongs to the EF-Ts family.

The protein resides in the cytoplasm. Its function is as follows. Associates with the EF-Tu.GDP complex and induces the exchange of GDP to GTP. It remains bound to the aminoacyl-tRNA.EF-Tu.GTP complex up to the GTP hydrolysis stage on the ribosome. This is Elongation factor Ts from Erwinia tasmaniensis (strain DSM 17950 / CFBP 7177 / CIP 109463 / NCPPB 4357 / Et1/99).